The chain runs to 120 residues: Cell division topological specificity factor (120 aa).

The tract at residues L93–P120 is disordered.

Belongs to the MinE family.

Its function is as follows. Prevents the cell division inhibition by proteins MinC and MinD at internal division sites while permitting inhibition at polar sites. This ensures cell division at the proper site by restricting the formation of a division septum at the midpoint of the long axis of the cell. The sequence is that of Cell division topological specificity factor from Synechococcus sp. (strain JA-3-3Ab) (Cyanobacteria bacterium Yellowstone A-Prime).